A 233-amino-acid chain; its full sequence is Uracil-DNA glycosylase (233 aa).

The active-site Proton acceptor is D70.

It belongs to the uracil-DNA glycosylase (UDG) superfamily. UNG family.

It localises to the cytoplasm. The catalysed reaction is Hydrolyzes single-stranded DNA or mismatched double-stranded DNA and polynucleotides, releasing free uracil.. Its function is as follows. Excises uracil residues from the DNA which can arise as a result of misincorporation of dUMP residues by DNA polymerase or due to deamination of cytosine. This is Uracil-DNA glycosylase from Helicobacter pylori (strain G27).